The sequence spans 227 residues: Ras-related protein Rab-3C (227 aa).

Residues Ser-39, Gly-42, Lys-43, Thr-44, Ser-45, Thr-56, Ser-57, Ser-61, and Thr-62 each contribute to the GTP site. Thr-44 is a Mg(2+) binding site. A Switch 1 motif is present at residues 53-66 (DSFTSAFVSTVGID). Residues Thr-62 and Asp-85 each coordinate Mg(2+). Thr-86 carries the phosphothreonine; by LRRK2 modification. The short motif at 86 to 104 (TAGQERYRTITTAYYRGAM) is the Switch 2 element. The GTP site is built by Gly-88, Asn-143, Lys-144, Asp-146, Ala-174, and Lys-175. Phosphoserine occurs at positions 196 and 198. The interval 202–227 (DPAITAAKQSTRLKETPPPPQPNCGC) is disordered. Position 206 is a phosphothreonine (Thr-206). A compositionally biased stretch (pro residues) spans 217–227 (TPPPPQPNCGC). S-geranylgeranyl cysteine attachment occurs at residues Cys-225 and Cys-227. Cys-227 carries the post-translational modification Cysteine methyl ester.

The protein belongs to the small GTPase superfamily. Rab family. In terms of assembly, interacts with RIMS1, RIMS2, RPH3A and RPH3AL. Interacts with GDI2, CHM and CHML; phosphorylation at Thr-86 disrupts these interactions. Interacts with MADD (via uDENN domain); the GTP-bound form is preferred for interaction. Mg(2+) is required as a cofactor. Post-translationally, phosphorylation of Thr-86 in the switch II region by LRRK2 prevents the association of RAB regulatory proteins, including CHM, CHML and RAB GDP dissociation inhibitor GDI2.

It is found in the cell membrane. The enzyme catalyses GTP + H2O = GDP + phosphate + H(+). With respect to regulation, regulated by guanine nucleotide exchange factors (GEFs) which promote the exchange of bound GDP for free GTP. Regulated by GTPase activating proteins (GAPs) which increase the GTP hydrolysis activity. Inhibited by GDP dissociation inhibitors (GDIs) which prevent Rab-GDP dissociation. Functionally, the small GTPases Rab are key regulators of intracellular membrane trafficking, from the formation of transport vesicles to their fusion with membranes. Rabs cycle between an inactive GDP-bound form and an active GTP-bound form that is able to recruit to membranes different sets of downstream effectors directly responsible for vesicle formation, movement, tethering and fusion. The sequence is that of Ras-related protein Rab-3C from Mus musculus (Mouse).